The chain runs to 399 residues: Phosphorylated adapter RNA export protein (399 aa).

A compositionally biased stretch (basic and acidic residues) spans 1-10 (MALEVRRMEG). Residues 1-83 (MALEVRRMEG…SESDDDSSLW (83 aa)) are disordered. The segment covering 11–22 (DVEDGELSDSDS) has biased composition (acidic residues). Over residues 37–53 (SNDGSNAGRPFQSSISS) the composition is skewed to polar residues. Residues 68 to 80 (SSDESFSESDDDS) show a composition bias toward acidic residues.

It belongs to the PHAX family.

It localises to the nucleus. Its subcellular location is the cytoplasm. Probably involved in protein and RNA export from the nucleus. The polypeptide is Phosphorylated adapter RNA export protein (PHAX) (Gallus gallus (Chicken)).